The sequence spans 348 residues: Histidinol-phosphate aminotransferase (348 aa).

Lys207 bears the N6-(pyridoxal phosphate)lysine mark.

The protein belongs to the class-II pyridoxal-phosphate-dependent aminotransferase family. Histidinol-phosphate aminotransferase subfamily. In terms of assembly, homodimer. Requires pyridoxal 5'-phosphate as cofactor.

It catalyses the reaction L-histidinol phosphate + 2-oxoglutarate = 3-(imidazol-4-yl)-2-oxopropyl phosphate + L-glutamate. Its pathway is amino-acid biosynthesis; L-histidine biosynthesis; L-histidine from 5-phospho-alpha-D-ribose 1-diphosphate: step 7/9. The chain is Histidinol-phosphate aminotransferase from Crocosphaera subtropica (strain ATCC 51142 / BH68) (Cyanothece sp. (strain ATCC 51142)).